The sequence spans 380 residues: Cytochrome b (380 aa).

4 helical membrane passes run 33–53 (FGSL…FLAM), 77–98 (WLIR…YLHV), 113–133 (WNIG…GYVL), and 178–198 (FFAF…IHLL). The heme b site is built by histidine 83 and histidine 97. Residues histidine 182 and histidine 196 each contribute to the heme b site. Histidine 201 lines the a ubiquinone pocket. Helical transmembrane passes span 226 to 246 (YKDL…ALFS), 288 to 308 (LGGV…PMLH), 320 to 340 (LSQI…WIGG), and 347 to 367 (FVLI…IALP).

The protein belongs to the cytochrome b family. In terms of assembly, the cytochrome bc1 complex contains 3 respiratory subunits (MT-CYB, CYC1 and UQCRFS1), 2 core proteins (UQCRC1 and UQCRC2) and probably 6 low-molecular weight proteins. It depends on heme b as a cofactor.

The protein resides in the mitochondrion inner membrane. In terms of biological role, component of the ubiquinol-cytochrome c reductase complex (complex III or cytochrome b-c1 complex) that is part of the mitochondrial respiratory chain. The b-c1 complex mediates electron transfer from ubiquinol to cytochrome c. Contributes to the generation of a proton gradient across the mitochondrial membrane that is then used for ATP synthesis. The polypeptide is Cytochrome b (mt-cyb) (Acipenser persicus (Persian sturgeon)).